The chain runs to 265 residues: Mlc titration factor A (265 aa).

Zn(2+) contacts are provided by His-111, His-148, His-152, and Glu-211.

The protein belongs to the MtfA family. As to quaternary structure, monomer in solution. Interacts with Mlc. The cofactor is Zn(2+).

Its subcellular location is the cytoplasm. With respect to regulation, association between Mlc and MtfA may induce structural changes that activate the peptidase activity of MtfA while inactivating the DNA-binding ability of Mlc. The aminopeptidase activity is partially inhibited by metal chelators such as EDTA and phenantroline, but not by inhibitors for serine-, aspartyl-, or cysteine-proteases. Its function is as follows. Involved in the modulation of the activity of the glucose-phosphotransferase system (glucose-PTS). Interacts with the transcriptional repressor Mlc, preventing its interaction with DNA and leading to the modulation of expression of genes regulated by Mlc, including ptsG, which encodes the PTS system glucose-specific EIICB component. Shows zinc-dependent metallopeptidase activity. In vitro, can cleave several artificial substrates. The highest activity is observed for L-alanine fused to 4-nitroanilide (L-alanine-pNA). Shows lower activity towards proline-pNA and valine-pNA. This chain is Mlc titration factor A, found in Klebsiella pneumoniae subsp. pneumoniae (strain ATCC 700721 / MGH 78578).